The following is a 2327-amino-acid chain: MVRFGDELGGRYGGTGGGERARGGGAGGAGGPGQGGLPPGQRVLYKQSIAQRARTMALYNPIPVKQNCFTVNRSLFVFSEDNVVRKYAKRITEWPPFEYMILATIIANCIVLALEQHLPDGDKTPMSERLDDTEPYFIGIFCFEAGIKIIALGFVFHKGSYLRNGWNVMDFVVVLTGILATAGTDFDLRTLRAVRVLRPLKLVSGIPSLQVVLKSIMKAMVPLLQIGLLLFFAILMFAIIGLEFYMGKFHKACFPNSTDTEPVGDFPCGKDPPARQCDGDTECREYWPGPNFGITNFDNILFAILTVFQCITMEGWTDILYNTNDAAGNTWNWLYFIPLIIIGSFFMLNLVLGVLSGEFAKERERVENRRAFLKLRRQQQIERELNGYLEWIFKAEEVMLAEEDKNAEEKSPLDVLKRAATKKSRNDLIHAEEGEDRFVDLCAVGSPFARASLKSGKTESSSYFRRKEKMFRFFIRRMVKAQSFYWVVLCVVALNTLCVAMVHYNQPQRLTTALYFAEFVFLGLFLTEMSLKMYGLGPRSYFRSSFNCFDFGVIVGSIFEVVWAAIKPGTSFGISVLRALRLLRIFKVTKYWNSLRNLVVSLLNSMKSIISLLFLLFLFIVVFALLGMQLFGGQFNFQDETPTTNFDTFPAAILTVFQILTGEDWNAVMYHGIESQGGVSKGMFSSFYFIVLTLFGNYTLLNVFLAIAVDNLANAQELTKDEEEMEEAANQKLALQKAKEVAEVSPMSAANISIAARQQNSAKARSVWEQRASQLRLQNLRASCEALYSEMDPEERLRYASTRHVRPDMKTHMDRPLVVEPGRDGLRGPVGSKSKPEGTEATESADLPRRHHRHRDRDKTSATAPAGGEQDRTESTETGAREERARPRRSHSKETPGADTQVRCERSRRHHRRGSPEEATEREPRRHRAHRHAQDSSKEGTAPVLVPKGERRARHRGPRTGPREAENNEEPTRRHRARHKVPPTLQPPEREAAEKESNAVEGDKETRNHQPKEPHCDLEAIAVTGVGPLHMLPSTCLQKVDEQPEDADNQRNVTRMGSQPSDPSTTVHVPVTLTGPPGETPVVPSGNMNLEGQAEGKKEAEADDVLRRGPRPIVPYSSMFCLSPTNLLRRFCHYIVTMRYFEMVILVVIALSSIALAAEDPVRTDSFRNNALKYMDYIFTGVFTFEMVIKMIDLGLLLHPGAYFRDLWNILDFIVVSGALVAFAFSSFMGGSKGKDINTIKSLRVLRVLRPLKTIKRLPKLKAVFDCVVNSLKNVLNILIVYMLFMFIFAVIAVQLFKGKFFYCTDESKELERDCRGQYLDYEKEEVEAQPRQWKKYDFHYDNVLWALLTLFTVSTGEGWPMVLKHSVDATYEEQGPSPGFRMELSIFYVVYFVVFPFFFVNIFVALIIITFQEQGDKVMSECSLEKNERACIDFAISAKPLTRYMPQNKQSFQYKTWTFVVSPPFEYFIMAMIALNTVVLMMKFYDAPYEYELMLKCLNIVFTSMFSMECILKIIAFGVLNYFRDAWNVFDFVTVLGSITDILVTEIANNFINLSFLRLFRAARLIKLLRQGYTIRILLWTFVQSFKALPYVCLLIAMLFFIYAIIGMQVFGNIALDDDTSINRHNNFRTFLQALMLLFRSATGEAWHEIMLSCLGNRACDPHANASECGSDFAYFYFVSFIFLCSFLMLNLFVAVIMDNFEYLTRDSSILGPHHLDEFIRVWAEYDPAACGRISYNDMFEMLKHMSPPLGLGKKCPARVAYKRLVRMNMPISNEDMTVHFTSTLMALIRTALEIKLAPAGTKQHQCDAELRKEISSVWANLPQKTLDLLVPPHKPDEMTVGKVYAALMIFDFYKQNKTTRDQTHQAPGGLSQMGPVSLFHPLKATLEQTQPAVLRGARVFLRQKSATSLSNGGAIQTQESGIKESLSWGTQRTQDALYEARAPLERGHSAEIPVGQSGTLAVDVQMQNMTLRGPDGEPQPGLESQGRAASMPRLAAETQPAPNASPMKRSISTLAPRPHGTQLCSTVLDRPPPSQASHHHHHRCHRRRDKKQRSLEKGPSLSVDPEGAPSTAAGPGLPHGEGSTACRRDRKQERGRSQERRQPSSSSSEKQRFYSCDRFGSREPPQLMPSLSSHPTSPTAALEPAPHPQGSGSVNGSPLMSTSGASTPGRGGRRQLPQTPLTPRPSITYKTANSSPVHFAEGQSGLPAFSPGRLSRGLSEHNALLQKEPLSQPLAPGSRIGSDPYLGQRLDSEASAHTLPEDTLTFEEAVATNSGRSSRTSYVSSLTSQSHPLRRVPNGYHCTLGLSTGVRARHSYHHPDQDHWC.

The interval methionine 1–leucine 37 is disordered. Topologically, residues methionine 1–arginine 90 are cytoplasmic. Gly residues predominate over residues glycine 10–leucine 37. Omega-N-methylarginine is present on arginine 22. The I repeat unit spans residues asparagine 82 to phenylalanine 359. Residues isoleucine 91–leucine 114 traverse the membrane as a helical segment. The Extracellular segment spans residues glutamate 115 to aspartate 131. The helical transmembrane segment at aspartate 132–leucine 152 threads the bilayer. The Cytoplasmic portion of the chain corresponds to glycine 153–arginine 163. A helical membrane pass occupies residues asparagine 164–alanine 182. Over glycine 183 to aspartate 187 the chain is Extracellular. The helical transmembrane segment at leucine 188 to valine 211 threads the bilayer. Residues valine 212–valine 221 lie on the Cytoplasmic side of the membrane. Residues proline 222–phenylalanine 244 form a helical membrane-spanning segment. At tyrosine 245–tryptophan 331 the chain is on the extracellular side. Asparagine 256 carries N-linked (GlcNAc...) asparagine glycosylation. The chain crosses the membrane as a helical span at residues asparagine 332–serine 356. The Cytoplasmic segment spans residues glycine 357 to glutamine 482. The tract at residues glutamine 379–glutamate 396 is binding to the beta subunit. Serine 411 bears the Phosphoserine mark. An ATP-binding site is contributed by alanine 451 to threonine 458. An II repeat occupies glutamate 468–leucine 712. The helical transmembrane segment at serine 483–methionine 501 threads the bilayer. The Extracellular portion of the chain corresponds to valine 502–threonine 511. The chain crosses the membrane as a helical span at residues threonine 512–tyrosine 534. Residues glycine 535–serine 544 are Cytoplasmic-facing. Serine 544 contacts a 1,2-diacyl-sn-glycero-3-phospho-(1D-myo-inositol-4,5-bisphosphate). The helical transmembrane segment at serine 545–isoleucine 566 threads the bilayer. The Extracellular portion of the chain corresponds to lysine 567–glycine 573. Residues isoleucine 574–phenylalanine 586 traverse the membrane as a helical segment. A 1,2-diacyl-sn-glycero-3-phospho-(1D-myo-inositol-4,5-bisphosphate) contacts are provided by arginine 584 and lysine 587. The Cytoplasmic segment spans residues lysine 587 to asparagine 604. A helical transmembrane segment spans residues serine 605–leucine 630. The Extracellular segment spans residues phenylalanine 631 to glycine 682. A helical transmembrane segment spans residues methionine 683–valine 709. The Cytoplasmic portion of the chain corresponds to aspartate 710 to tyrosine 1140. 3 positions are modified to phosphoserine: serine 745, serine 748, and serine 783. 2 disordered regions span residues threonine 802–histidine 1015 and glutamate 1042–threonine 1066. 5 stretches are compositionally biased toward basic and acidic residues: residues valine 805 to leucine 826, glutamate 869 to alanine 885, glycine 914 to proline 924, glycine 961 to threonine 972, and proline 988 to histidine 1015. Polar residues predominate over residues glutamine 1050–threonine 1066. Serine 1058 is modified (phosphoserine). The stretch at asparagine 1126 to phenylalanine 1412 is one III repeat. A helical membrane pass occupies residues phenylalanine 1141–glutamate 1159. The Extracellular portion of the chain corresponds to aspartate 1160–phenylalanine 1167. Residues arginine 1168 to isoleucine 1192 traverse the membrane as a helical segment. Over aspartate 1193–aspartate 1206 the chain is Cytoplasmic. A helical membrane pass occupies residues leucine 1207 to glycine 1231. The Extracellular portion of the chain corresponds to serine 1232 to isoleucine 1237. Residues asparagine 1238 to leucine 1258 traverse the membrane as a helical segment. Residues proline 1259–leucine 1276 lie on the Cytoplasmic side of the membrane. A helical transmembrane segment spans residues asparagine 1277 to leucine 1296. At phenylalanine 1297–methionine 1383 the chain is on the extracellular side. The helical transmembrane segment at glutamate 1384–isoleucine 1409 threads the bilayer. Residues isoleucine 1410 to proline 1464 lie on the Cytoplasmic side of the membrane. An IV repeat occupies asparagine 1449–phenylalanine 1702. A helical transmembrane segment spans residues proline 1465–methionine 1483. Residues lysine 1484–glutamate 1491 are Extracellular-facing. Residues tyrosine 1492 to isoleucine 1516 form a helical membrane-spanning segment. Topologically, residues alanine 1517–aspartate 1526 are cytoplasmic. A helical transmembrane segment spans residues alanine 1527–isoleucine 1548. Residues alanine 1549–asparagine 1554 are Extracellular-facing. N-linked (GlcNAc...) asparagine glycosylation occurs at asparagine 1554. Residues leucine 1555–glycine 1573 traverse the membrane as a helical segment. Topologically, residues tyrosine 1574–tyrosine 1592 are cytoplasmic. The chain crosses the membrane as a helical span at residues valine 1593–phenylalanine 1612. Residues glycine 1613 to phenylalanine 1674 are Extracellular-facing. Asparagine 1666 is a glycosylation site (N-linked (GlcNAc...) asparagine). Residues alanine 1675 to isoleucine 1698 traverse the membrane as a helical segment. The Cytoplasmic segment spans residues methionine 1699–cysteine 2327. The EF-hand domain occupies histidine 1715–proline 1750. Positions 1728, 1734, and 1739 each coordinate Ca(2+). The tract at residues threonine 1972–threonine 2193 is disordered. Residues serine 2039–lysine 2053 are compositionally biased toward basic residues. A Phosphoserine modification is found at serine 2056. A compositionally biased stretch (basic and acidic residues) spans cysteine 2088 to glutamine 2104. Composition is skewed to polar residues over residues proline 2131 to threonine 2141 and glycine 2152 to serine 2168. Serine 2212, serine 2221, and serine 2244 each carry phosphoserine. 2 disordered regions span residues glutamate 2230 to glycine 2249 and alanine 2273 to serine 2292. Residues serine 2276–serine 2292 are compositionally biased toward low complexity.

The protein belongs to the calcium channel alpha-1 subunit (TC 1.A.1.11) family. CACNA1B subfamily. In terms of assembly, multisubunit complex consisting of alpha-1, alpha-2, beta and delta subunits in a 1:1:1:1 ratio. The channel activity is directed by the pore-forming and voltage-sensitive alpha-1 subunit. In many cases, this subunit is sufficient to generate voltage-sensitive calcium channel activity. The auxiliary subunits beta and alpha-2/delta linked by a disulfide bridge regulate the channel activity. Interacts with RIMS1. Interacts with FMR1 (via C-terminus); this interaction induces a decrease in the number of presynaptic functional CACNA1B channels at the cell surface. Post-translationally, phosphorylated in vitro by CaM-kinase II, PKA, PKC and CGPK. Widespread expression throughout the brain. Highest levels in pyramidal cell layers C1, C2 and C3 of the hippocampus, in the dentate gyrus, in the cortex layers 2 et 4, in the subiculum and the habenula.

The protein resides in the membrane. It carries out the reaction Ca(2+)(in) = Ca(2+)(out). Is specifically blocked by omega-conotoxin GVIA. Is specifically blocked by omega-conotoxin MVIIA (ziconotide). Is insensitive to dihydropyridines (DHP). Its function is as follows. Voltage-sensitive calcium channels (VSCC) mediate the entry of calcium ions into excitable cells and are also involved in a variety of calcium-dependent processes, including muscle contraction, hormone or neurotransmitter release, gene expression, cell motility, cell division and cell death. This alpha-1B subunit gives rise to N-type calcium currents. N-type calcium channels belong to the 'high-voltage activated' (HVA) group. They are involved in pain signaling. Calcium channels containing alpha-1B subunit may play a role in directed migration of immature neurons. Mediates Ca(2+) release probability at hippocampal neuronal soma and synaptic terminals. The protein is Voltage-dependent N-type calcium channel subunit alpha-1B (Cacna1b) of Mus musculus (Mouse).